The following is a 156-amino-acid chain: Ribosomal RNA large subunit methyltransferase H (156 aa).

S-adenosyl-L-methionine-binding positions include L73, G104, and 123–128 (LSALTL).

It belongs to the RNA methyltransferase RlmH family. Homodimer.

It is found in the cytoplasm. The catalysed reaction is pseudouridine(1915) in 23S rRNA + S-adenosyl-L-methionine = N(3)-methylpseudouridine(1915) in 23S rRNA + S-adenosyl-L-homocysteine + H(+). Specifically methylates the pseudouridine at position 1915 (m3Psi1915) in 23S rRNA. The chain is Ribosomal RNA large subunit methyltransferase H from Shewanella loihica (strain ATCC BAA-1088 / PV-4).